The following is a 188-amino-acid chain: V-type ATP synthase subunit E (188 aa).

It belongs to the V-ATPase E subunit family.

Its function is as follows. Produces ATP from ADP in the presence of a proton gradient across the membrane. This is V-type ATP synthase subunit E from Thermus thermophilus (strain ATCC BAA-163 / DSM 7039 / HB27).